A 528-amino-acid polypeptide reads, in one-letter code: Peptide chain release factor 3 (528 aa).

Positions 10–279 (AKRRTFAIIS…GLVEWAPAPM (270 aa)) constitute a tr-type G domain. GTP contacts are provided by residues 19 to 26 (SHPDAGKT), 87 to 91 (DTPGH), and 141 to 144 (NKLD).

It belongs to the TRAFAC class translation factor GTPase superfamily. Classic translation factor GTPase family. PrfC subfamily.

It is found in the cytoplasm. In terms of biological role, increases the formation of ribosomal termination complexes and stimulates activities of RF-1 and RF-2. It binds guanine nucleotides and has strong preference for UGA stop codons. It may interact directly with the ribosome. The stimulation of RF-1 and RF-2 is significantly reduced by GTP and GDP, but not by GMP. This Escherichia coli O1:K1 / APEC protein is Peptide chain release factor 3.